A 606-amino-acid chain; its full sequence is Medium-chain acyl-CoA ligase ACSF2, mitochondrial (606 aa).

Residues 1 to 13 (MSSKILLTNLRTS) constitute a mitochondrion transit peptide. ATP-binding positions include 256 to 264 (TSGTTGKPK), Asp-484, Arg-499, and Lys-590.

This sequence belongs to the ATP-dependent AMP-binding enzyme family.

The protein resides in the mitochondrion. It carries out the reaction a medium-chain fatty acid + ATP + CoA = a medium-chain fatty acyl-CoA + AMP + diphosphate. The catalysed reaction is octanoate + ATP + CoA = octanoyl-CoA + AMP + diphosphate. In terms of biological role, acyl-CoA synthases catalyze the initial reaction in fatty acid metabolism, by forming a thioester with CoA. Has some preference toward medium-chain substrates. Plays a role in adipocyte differentiation. The chain is Medium-chain acyl-CoA ligase ACSF2, mitochondrial from Danio rerio (Zebrafish).